Here is a 302-residue protein sequence, read N- to C-terminus: Probable alpha-L-glutamate ligase (302 aa).

An ATP-grasp domain is found at 112 to 294 (LQLLLKTGVP…IAAEIIDYIE (183 aa)). ATP-binding positions include Lys-148, 185 to 186 (DF), Asp-194, and 218 to 220 (RAN). The Mg(2+) site is built by Asp-255, Glu-267, and Asn-269. Mn(2+) is bound by residues Asp-255, Glu-267, and Asn-269.

Belongs to the RimK family. Requires Mg(2+) as cofactor. Mn(2+) is required as a cofactor.

This chain is Probable alpha-L-glutamate ligase, found in Haemophilus influenzae (strain 86-028NP).